We begin with the raw amino-acid sequence, 358 residues long: Peptide chain release factor 1 (358 aa).

Q233 bears the N5-methylglutamine mark.

This sequence belongs to the prokaryotic/mitochondrial release factor family. Methylated by PrmC. Methylation increases the termination efficiency of RF1.

It localises to the cytoplasm. Its function is as follows. Peptide chain release factor 1 directs the termination of translation in response to the peptide chain termination codons UAG and UAA. The polypeptide is Peptide chain release factor 1 (Clostridium botulinum (strain Okra / Type B1)).